Consider the following 270-residue polypeptide: MSQKKSPRFELRSGNVDALLLALQTADMAALRDDLLARFEATPDFFSNDVIALDLRALEDDSEVALGTVIETLATLRARAIGVVARPGQREWAERFGLPLLDSQARRGSGADRATDRAAEARAAAAAEQAAADQAAREESIRAAAQATTDAAVAAAIRQTQTMLIDKPLRSGQQVYAQGDVVILDVVSYGAEVIAEGNIHIYAPLRGRALAGVKGNTGARIFSTCMEPELISIAGIYRTAEQTLPADVLGKTAQVRLADEKLILEALRLK.

The protein belongs to the MinC family. In terms of assembly, interacts with MinD and FtsZ.

In terms of biological role, cell division inhibitor that blocks the formation of polar Z ring septums. Rapidly oscillates between the poles of the cell to destabilize FtsZ filaments that have formed before they mature into polar Z rings. Prevents FtsZ polymerization. The chain is Probable septum site-determining protein MinC from Cupriavidus necator (strain ATCC 17699 / DSM 428 / KCTC 22496 / NCIMB 10442 / H16 / Stanier 337) (Ralstonia eutropha).